A 146-amino-acid polypeptide reads, in one-letter code: ATP synthase epsilon chain (146 aa).

The interval 103 to 122 is disordered; the sequence is SAKKRAEQHMQEAKEKHNER.

Belongs to the ATPase epsilon chain family. F-type ATPases have 2 components, CF(1) - the catalytic core - and CF(0) - the membrane proton channel. CF(1) has five subunits: alpha(3), beta(3), gamma(1), delta(1), epsilon(1). CF(0) has three main subunits: a, b and c.

The protein localises to the cell membrane. Produces ATP from ADP in the presence of a proton gradient across the membrane. The protein is ATP synthase epsilon chain of Lactobacillus johnsonii (strain CNCM I-12250 / La1 / NCC 533).